Consider the following 279-residue polypeptide: MKVISSIHELRDQLRGQNRTAFVPTMGNLHEGHLSLMRLARQHGDPVVASIFVNRLQFGPNEDFDKYPRTLQDDIEKLQKENVYVLFAPTERDMYPEPQEYRVLPPDDLGGILEGEFRPGFFTGVCTVVTKLMACVQPRVAVFGKKDYQQLMIVRRMCQQLALPVDIIAAETVRDEDGLALSSRNRYLSADERSEAPELAKTLQRIRESVLGGEHDLGKLEEMARTHLAGRGWAPDYISIRRRANLIAPDAAQLEAGEPLVVVAAAKLGATRLIDNLEI.

26-33 (MGNLHEGH) provides a ligand contact to ATP. His33 functions as the Proton donor in the catalytic mechanism. Gln57 provides a ligand contact to (R)-pantoate. Gln57 is a binding site for beta-alanine. 144–147 (GKKD) contributes to the ATP binding site. Gln150 serves as a coordination point for (R)-pantoate. ATP contacts are provided by residues Val173 and 181–184 (LSSR).

This sequence belongs to the pantothenate synthetase family. As to quaternary structure, homodimer.

The protein localises to the cytoplasm. It carries out the reaction (R)-pantoate + beta-alanine + ATP = (R)-pantothenate + AMP + diphosphate + H(+). The protein operates within cofactor biosynthesis; (R)-pantothenate biosynthesis; (R)-pantothenate from (R)-pantoate and beta-alanine: step 1/1. Its function is as follows. Catalyzes the condensation of pantoate with beta-alanine in an ATP-dependent reaction via a pantoyl-adenylate intermediate. In Burkholderia lata (strain ATCC 17760 / DSM 23089 / LMG 22485 / NCIMB 9086 / R18194 / 383), this protein is Pantothenate synthetase.